The sequence spans 1170 residues: Short transient receptor potential channel 2 (1170 aa).

Topologically, residues 1–627 (MLMSLTDSKE…GWRGSTTIWK (627 aa)) are cytoplasmic. 3 disordered regions span residues 64–113 (SLSD…QTST), 142–231 (AHKA…QATG), and 322–342 (ESGSDPSGAGPGGPLRNVEES). A compositionally biased stretch (polar residues) spans 74–85 (SPGSSGLNQNSS). Over residues 158–177 (GEPDSSHPERAEPRAEEPNR) the composition is skewed to basic and acidic residues. 4 ANK repeats span residues 300–329 (KFPPTLLRAIQEGQLGLVQQLLESGSDPSG), 346–376 (SWREALNLAIRLGHEVITDVLLANVKFDFRQ), 377–405 (IHEALLVAVDTNQPAVVRRLLARLEREKG), and 429–458 (PGVTPLTLACQKDLYEIAQLLMDQGHTIAR). Residues 628–648 (LFVAFLIFLTMPFLCIGYWLA) form a helical membrane-spanning segment. The Extracellular portion of the chain corresponds to 649–658 (PKSRLGRLLK). A helical membrane pass occupies residues 659-679 (IPVLKFLLHSASYLWFLIFLL). Residues 680–701 (GESLVMETQLSTFKGRSQSVWE) are Cytoplasmic-facing. Residues 702 to 722 (TSLHMIWVTGFLWFECKEVWI) form a helical membrane-spanning segment. Residues 723 to 737 (EGLRSYLLDWWNFLD) are Extracellular-facing. Residues 738–758 (VVILSLYLASFALRLLLAGLA) traverse the membrane as a helical segment. The Cytoplasmic segment spans residues 759-788 (YMHCRDASDSSTCRYFTTAERSEWRTEDPQ). A helical transmembrane segment spans residues 789–809 (FLAEVLFAVTSMLSFTRLAYI). The Extracellular segment spans residues 810–832 (LPAHESLGTLQISIGKMIDDMIR). The helical transmembrane segment at 833 to 853 (FMFILMIILTAFLCGLNNIYV) threads the bilayer. At 854-898 (PYQETEKLGNFNETFQFLFWTMFGMEEHSVVDMPQFLVPEFVGRA) the chain is on the cytoplasmic side. A helical transmembrane segment spans residues 899–919 (MYGIFTIVMVIVLLNMLIAMI). Residues 920-1170 (TNSFQKIEDD…GEDLETKGES (251 aa)) are Extracellular-facing. Residues 1030-1068 (RREFEETRRKDLGNRLTELTKTVSRLQSEVASVQKTVAA) are a coiled coil. Positions 1118 to 1170 (LEDSLDATGEAGTPASGESSSSSSAHVLVHREQEAEGAGDLPLGEDLETKGES) are disordered.

Belongs to the transient receptor (TC 1.A.4) family. STrpC subfamily. TRPC2 sub-subfamily. Expressed exclusively in vomeronasal organ neurons (sensory microvilli).

Its subcellular location is the membrane. In terms of biological role, thought to form a receptor-activated calcium permeant cation channel. Probably is operated by a phosphatidylinositol second messenger system activated by receptor tyrosine kinases or G-protein coupled receptors. Is not activated by intracellular calcium store depletion. The polypeptide is Short transient receptor potential channel 2 (Trpc2) (Rattus norvegicus (Rat)).